Reading from the N-terminus, the 269-residue chain is 3-methyl-2-oxobutanoate hydroxymethyltransferase (269 aa).

Mg(2+) is bound by residues aspartate 43 and aspartate 82. 3-methyl-2-oxobutanoate is bound by residues 43–44 (DS), aspartate 82, and lysine 110. Residue glutamate 112 participates in Mg(2+) binding. Catalysis depends on glutamate 179, which acts as the Proton acceptor.

This sequence belongs to the PanB family. Homodecamer; pentamer of dimers. It depends on Mg(2+) as a cofactor.

It is found in the cytoplasm. The enzyme catalyses 3-methyl-2-oxobutanoate + (6R)-5,10-methylene-5,6,7,8-tetrahydrofolate + H2O = 2-dehydropantoate + (6S)-5,6,7,8-tetrahydrofolate. It participates in cofactor biosynthesis; (R)-pantothenate biosynthesis; (R)-pantoate from 3-methyl-2-oxobutanoate: step 1/2. Functionally, catalyzes the reversible reaction in which hydroxymethyl group from 5,10-methylenetetrahydrofolate is transferred onto alpha-ketoisovalerate to form ketopantoate. The protein is 3-methyl-2-oxobutanoate hydroxymethyltransferase of Acinetobacter baumannii (strain AB307-0294).